The sequence spans 244 residues: Probable fimbrial assembly protein FimC, serogroup H1 (244 aa).

The protein is Probable fimbrial assembly protein FimC, serogroup H1 (fimC) of Dichelobacter nodosus (Bacteroides nodosus).